Here is a 363-residue protein sequence, read N- to C-terminus: 3-dehydroquinate synthase (363 aa).

NAD(+) contacts are provided by residues 107-111, 131-132, Lys-144, and Lys-153; these read GVIGD and TT. Positions 186, 251, and 268 each coordinate Zn(2+).

This sequence belongs to the sugar phosphate cyclases superfamily. Dehydroquinate synthase family. Co(2+) serves as cofactor. The cofactor is Zn(2+). It depends on NAD(+) as a cofactor.

The protein resides in the cytoplasm. The enzyme catalyses 7-phospho-2-dehydro-3-deoxy-D-arabino-heptonate = 3-dehydroquinate + phosphate. Its pathway is metabolic intermediate biosynthesis; chorismate biosynthesis; chorismate from D-erythrose 4-phosphate and phosphoenolpyruvate: step 2/7. In terms of biological role, catalyzes the conversion of 3-deoxy-D-arabino-heptulosonate 7-phosphate (DAHP) to dehydroquinate (DHQ). The protein is 3-dehydroquinate synthase of Nostoc punctiforme (strain ATCC 29133 / PCC 73102).